A 398-amino-acid chain; its full sequence is Elongation factor Tu (398 aa).

A tr-type G domain is found at 10–207 (KPHVNIGTIG…TVDEYIPEPE (198 aa)). Positions 19–26 (GHVDHGKT) are G1. 19–26 (GHVDHGKT) serves as a coordination point for GTP. T26 provides a ligand contact to Mg(2+). Positions 63–67 (GITIN) are G2. The segment at 84–87 (DAPG) is G3. Residues 84–88 (DAPGH) and 139–142 (NKVD) contribute to the GTP site. The interval 139–142 (NKVD) is G4. The G5 stretch occupies residues 177 to 179 (SAL).

It belongs to the TRAFAC class translation factor GTPase superfamily. Classic translation factor GTPase family. EF-Tu/EF-1A subfamily. As to quaternary structure, monomer.

The protein localises to the cytoplasm. The enzyme catalyses GTP + H2O = GDP + phosphate + H(+). Functionally, GTP hydrolase that promotes the GTP-dependent binding of aminoacyl-tRNA to the A-site of ribosomes during protein biosynthesis. This Streptococcus pyogenes serotype M49 (strain NZ131) protein is Elongation factor Tu.